A 49-amino-acid chain; its full sequence is Large ribosomal subunit protein bL33A (49 aa).

A disordered region spans residues lysine 21 to lysine 49. Basic and acidic residues predominate over residues asparagine 25–lysine 49.

It belongs to the bacterial ribosomal protein bL33 family.

The sequence is that of Large ribosomal subunit protein bL33A from Staphylococcus epidermidis (strain ATCC 35984 / DSM 28319 / BCRC 17069 / CCUG 31568 / BM 3577 / RP62A).